Reading from the N-terminus, the 1574-residue chain is Disco-interacting protein 2 homolog B (1574 aa).

A phosphoserine mark is found at Ser9, Ser50, and Ser53. One can recognise a DMAP1-binding domain in the interval Ala12–Phe130. The segment at Leu31–Ser166 is disordered. The segment covering Tyr52 to Ile62 has biased composition (polar residues). Positions Gln69–Ser82 are enriched in low complexity. A Phosphothreonine modification is found at Thr70. Over residues Gly91 to Thr103 the composition is skewed to basic and acidic residues. Ser99 carries the post-translational modification Phosphoserine. Phosphothreonine is present on Thr139. Residues Ser145, Ser147, and Ser152 each carry the phosphoserine modification. A compositionally biased stretch (low complexity) spans Arg154–Ser166. Phosphoserine occurs at positions 177, 192, and 202. The segment at Ile178 to Ser200 is disordered. The span at Ser181 to Ser192 shows a compositional bias: low complexity. Residues Ala217–Ile244 form a disordered region. Ser256 carries the post-translational modification Phosphoserine.

The protein belongs to the DIP2 family. In terms of assembly, interacts with alpha-tubulin. Highly expressed in brain and spinal cord (at protein level). In brain, expression is detected in the main olfactory bulb, cortex, lateral ventricle, cornu ammonis 1, cornu ammonis 3, dentate gyrus, striatum, cerebellar cortex and medial habenula. Expressed primarily in neurons including excitatory pyramidal neurons and inhibitory interneurons.

It is found in the cell projection. Its subcellular location is the dendrite. The protein localises to the axon. The protein resides in the perikaryon. Functionally, negatively regulates axonal outgrowth and is essential for normal synaptic transmission. Not required for regulation of axon polarity. Promotes acetylation of alpha-tubulin. This Mus musculus (Mouse) protein is Disco-interacting protein 2 homolog B (Dip2b).